Consider the following 208-residue polypeptide: MYDPMATAMNLVPMVVEQTSRGERAFDIFSRLLKERIIFLTGPVEDGMASLICAQLLFLESENPKKEIAMYINSPGGVVTAGLAIYDTMQYIKSPVSTVCMGMAASMGSLLLQAGAPGHRIALPNARIMVHQPSGGFRGQASDIERHAEDIIKTKRRLNEIYVKHTGRTYEEVEKTLDRDHFMSAEEAKAWGLIDHINESRDEADEKA.

The active-site Nucleophile is the Ser106. The active site involves His131.

Belongs to the peptidase S14 family. Fourteen ClpP subunits assemble into 2 heptameric rings which stack back to back to give a disk-like structure with a central cavity, resembling the structure of eukaryotic proteasomes.

The protein localises to the cytoplasm. It carries out the reaction Hydrolysis of proteins to small peptides in the presence of ATP and magnesium. alpha-casein is the usual test substrate. In the absence of ATP, only oligopeptides shorter than five residues are hydrolyzed (such as succinyl-Leu-Tyr-|-NHMec, and Leu-Tyr-Leu-|-Tyr-Trp, in which cleavage of the -Tyr-|-Leu- and -Tyr-|-Trp bonds also occurs).. In terms of biological role, cleaves peptides in various proteins in a process that requires ATP hydrolysis. Has a chymotrypsin-like activity. Plays a major role in the degradation of misfolded proteins. The polypeptide is ATP-dependent Clp protease proteolytic subunit (Caulobacter sp. (strain K31)).